A 132-amino-acid polypeptide reads, in one-letter code: Small ribosomal subunit protein uS8 (132 aa).

It belongs to the universal ribosomal protein uS8 family. Part of the 30S ribosomal subunit. Contacts proteins S5 and S12.

Functionally, one of the primary rRNA binding proteins, it binds directly to 16S rRNA central domain where it helps coordinate assembly of the platform of the 30S subunit. This Staphylococcus carnosus (strain TM300) protein is Small ribosomal subunit protein uS8.